A 353-amino-acid chain; its full sequence is MEVSKEMLFEELDNYSYALDYYSQESDPEEKVYLGLVHWISLFLYALAFVLGIPGNAIVIWLMGFKWKKTVTTLWFLNLAIADFIFVLFLPLYISYVALSFHWPFGLWLCKVNSFIAQLNMFSSVFFLTVISLDRYIHLLHPGLSHRHRTLKSSLVVVILVWLLASLLGGPTLYFRDTMEVNNHIICYNNFQEHELTLMRHHVLTWVKFLFGYLFPLLTMSSCYLCLIFKMKKRNILISRKHLWMILSVVIAFLVCWTPYHLFSIWELSIHHNSSFQNVLQGGIPLSTGLAFLNSCLNPILYVLISKTFQARFRASVAEVLKRSLWEASCSGTVSEQLRSAETKSLSLLETAQ.

Topologically, residues 1–41 (MEVSKEMLFEELDNYSYALDYYSQESDPEEKVYLGLVHWIS) are extracellular. N-linked (GlcNAc...) asparagine glycosylation occurs at Asn-14. Residues 42–62 (LFLYALAFVLGIPGNAIVIWL) form a helical membrane-spanning segment. Over 63–73 (MGFKWKKTVTT) the chain is Cytoplasmic. The helical transmembrane segment at 74–94 (LWFLNLAIADFIFVLFLPLYI) threads the bilayer. The Extracellular portion of the chain corresponds to 95–112 (SYVALSFHWPFGLWLCKV). A disulfide bridge links Cys-110 with Cys-187. The chain crosses the membrane as a helical span at residues 113–133 (NSFIAQLNMFSSVFFLTVISL). Residues 134–154 (DRYIHLLHPGLSHRHRTLKSS) lie on the Cytoplasmic side of the membrane. The helical transmembrane segment at 155–175 (LVVVILVWLLASLLGGPTLYF) threads the bilayer. Residues 176-210 (RDTMEVNNHIICYNNFQEHELTLMRHHVLTWVKFL) are Extracellular-facing. The helical transmembrane segment at 211-231 (FGYLFPLLTMSSCYLCLIFKM) threads the bilayer. Topologically, residues 232–247 (KKRNILISRKHLWMIL) are cytoplasmic. The helical transmembrane segment at 248–268 (SVVIAFLVCWTPYHLFSIWEL) threads the bilayer. Over 269–286 (SIHHNSSFQNVLQGGIPL) the chain is Extracellular. A helical transmembrane segment spans residues 287–307 (STGLAFLNSCLNPILYVLISK). Topologically, residues 308–353 (TFQARFRASVAEVLKRSLWEASCSGTVSEQLRSAETKSLSLLETAQ) are cytoplasmic.

It belongs to the chemokine-like receptor (CMKLR) family. As to expression, high expressed in white adipose tissue and skeletal muscle. Expressed in hippocampus and cortex.

It is found in the cell membrane. In terms of biological role, receptor for chemoattractant adipokine chemerin/RARRES2 suggesting a role for this receptor in the regulation of inflammation and energy homesotasis. Signals mainly via beta-arrestin pathway. Binding of RARRES2 activates weakly G proteins, calcium mobilization and MAPK1/MAPK3 (ERK1/2) phosphorylation too. Acts also as a receptor for TAFA1, mediates its effects on neuronal stem-cell proliferation and differentiation via the activation of ROCK/ERK and ROCK/STAT3 signaling pathway. The protein is Chemerin-like receptor 2 (Cmklr2) of Mus musculus (Mouse).